Consider the following 143-residue polypeptide: Probable prefoldin subunit 2 (143 aa).

Belongs to the prefoldin subunit beta family. As to quaternary structure, heterohexamer of two PFD-alpha type and four PFD-beta type subunits.

In terms of biological role, binds specifically to cytosolic chaperonin (c-CPN) and transfers target proteins to it. Binds to nascent polypeptide chain and promotes folding in an environment in which there are many competing pathways for nonnative proteins. The polypeptide is Probable prefoldin subunit 2 (Drosophila melanogaster (Fruit fly)).